Here is a 206-residue protein sequence, read N- to C-terminus: MTVKKIAIFGATGRTGLTTLAQAVQAGYEVTVLVRDSSRLPSEGPQPAHVVVGDVRQAADVDKTVAGQEAVIVLLGTGNDLSPTTVMSEGTRNIVTAMKAHGVDKVVACTSAFLLWDPTKVPPRLQDVTDDHIRMHKILQESGLKYVAVMPPHIGDQPLTGAYTVTLDGRGPSRVISKHDLGHFMLRCLTTNEYDGHTTYPSHQYD.

Residues Gly10, Thr12, Gly13, Thr15, Arg35, Ser38, and Arg39 each contribute to the NADP(+) site. Ser42 is subject to Phosphoserine. Residues Asp54, Val55, Leu75, and Gly76 each contribute to the NADP(+) site. Ser82 carries the post-translational modification Phosphoserine. Met87, Cys109, His132, His153, and Ile154 together coordinate NADP(+). The active-site S-nitroso-cysteine intermediate; for S-nitroso-CoA-dependent nitrosyltransferase activity is Cys109. Residue Cys188 is the S-nitroso-cysteine intermediate; for S-nitroso-CoA-dependent nitrosyltransferase activity of the active site.

It belongs to the BLVRB family. In terms of assembly, monomer.

The protein resides in the cytoplasm. It carries out the reaction reduced riboflavin + NADP(+) = riboflavin + NADPH + 2 H(+). The enzyme catalyses bilirubin IXbeta + NADP(+) = biliverdin IXbeta + NADPH + H(+). The catalysed reaction is FMNH2 + NAD(+) = FMN + NADH + 2 H(+). It catalyses the reaction FMNH2 + NADP(+) = FMN + NADPH + 2 H(+). It carries out the reaction S-nitroso-CoA + L-cysteinyl-[protein] = S-nitroso-L-cysteinyl-[protein] + CoA. The enzyme catalyses L-cysteinyl-[SCAN] + S-nitroso-CoA = S-nitroso-L-cysteinyl-[SCAN] + CoA. The catalysed reaction is S-nitroso-L-cysteinyl-[SCAN] + L-cysteinyl-[protein] = L-cysteinyl-[SCAN] + S-nitroso-L-cysteinyl-[protein]. Enzyme that can both act as a NAD(P)H-dependent reductase and a S-nitroso-CoA-dependent nitrosyltransferase. Promotes fetal heme degradation during development. Also expressed in adult tissues, where it acts as a regulator of hematopoiesis, intermediary metabolism (glutaminolysis, glycolysis, TCA cycle and pentose phosphate pathway) and insulin signaling. Has a broad specificity oxidoreductase activity by catalyzing the NAD(P)H-dependent reduction of a variety of flavins, such as riboflavin, FAD or FMN, biliverdins, methemoglobin and PQQ (pyrroloquinoline quinone). Contributes to fetal heme catabolism by catalyzing reduction of biliverdin IXbeta into bilirubin IXbeta in the liver. Biliverdin IXbeta, which constitutes the major heme catabolite in the fetus is not present in adult. Does not reduce bilirubin IXalpha. Can also reduce the complexed Fe(3+) iron to Fe(2+) in the presence of FMN and NADPH. Acts as a protein nitrosyltransferase by catalyzing nitrosylation of cysteine residues of target proteins, such as HMOX2, INSR and IRS1. S-nitroso-CoA-dependent nitrosyltransferase activity is mediated via a 'ping-pong' mechanism: BLVRB first associates with both S-nitroso-CoA and protein substrate, nitric oxide group is then transferred from S-nitroso-CoA to Cys-109 and Cys-188 residues of BLVRB and from S-nitroso-BLVRB to the protein substrate. Inhibits insulin signaling by mediating nitrosylation of INSR and IRS1, leading to their inhibition. In Mus musculus (Mouse), this protein is Flavin reductase (NADPH) (Blvrb).